The chain runs to 168 residues: Photosystem I assembly protein Ycf3 (168 aa).

TPR repeat units lie at residues 35–68 (AFTY…EIDP), 72–105 (SYIL…NPFL), and 120–153 (GEQA…TPGN).

It belongs to the Ycf3 family.

Its subcellular location is the plastid membrane. In terms of biological role, essential for the assembly of the photosystem I (PSI) complex. May act as a chaperone-like factor to guide the assembly of the PSI subunits. The polypeptide is Photosystem I assembly protein Ycf3 (Cuscuta reflexa (Southern Asian dodder)).